A 446-amino-acid polypeptide reads, in one-letter code: Putative diacyglycerol O-acyltransferase Rv3371 (446 aa).

Residue His129 is the Proton acceptor of the active site. Residues 425 to 446 (SRALPSAARRGRPSVPTARARH) are disordered.

This sequence belongs to the long-chain O-acyltransferase family.

The catalysed reaction is an acyl-CoA + a 1,2-diacyl-sn-glycerol = a triacyl-sn-glycerol + CoA. The enzyme catalyses di-(9Z)-octadecenoylglycerol + (9Z)-octadecenoyl-CoA = 1,2,3-tri-(9Z-octadecenoyl)-glycerol + CoA. It participates in glycerolipid metabolism; triacylglycerol biosynthesis. Catalyzes the terminal and only committed step in triacylglycerol synthesis by using diacylglycerol and fatty acyl CoA as substrates. Required for storage lipid synthesis. Functionally, upon expression in E.coli functions weakly as a triacylglycerol synthase, making triacylglycerol (TG) from diolein and long-chain fatty acyl-CoA. Has no wax synthase activity to produce wax esters. The protein is Putative diacyglycerol O-acyltransferase Rv3371 of Mycobacterium tuberculosis (strain ATCC 25618 / H37Rv).